The sequence spans 239 residues: C-8 sterol isomerase erg2 (239 aa).

Residue asparagine 11 is glycosylated (N-linked (GlcNAc...) asparagine). The chain crosses the membrane as a helical span at residues 27–47 (KFGFLAVFVAIFAALYSYLDA). An N-linked (GlcNAc...) asparagine glycan is attached at asparagine 73.

Belongs to the ERG2 family.

It is found in the endoplasmic reticulum membrane. The catalysed reaction is fecosterol = episterol. It functions in the pathway steroid metabolism; ergosterol biosynthesis. In terms of biological role, C-8 sterol isomerase; part of the third module of ergosterol biosynthesis pathway that includes the late steps of the pathway. Erg2 catalyzes the reaction which results in unsaturation at C-7 in the B ring of sterols and thus converts fecosterol to episterol. The third module or late pathway involves the ergosterol synthesis itself through consecutive reactions that mainly occur in the endoplasmic reticulum (ER) membrane. Firstly, the squalene synthase erg9 catalyzes the condensation of 2 farnesyl pyrophosphate moieties to form squalene, which is the precursor of all steroids. Squalene synthase is crucial for balancing the incorporation of farnesyl diphosphate (FPP) into sterol and nonsterol isoprene synthesis. Secondly, squalene is converted into lanosterol by the consecutive action of the squalene epoxidase erg1 and the lanosterol synthase erg7. Then, the delta(24)-sterol C-methyltransferase erg6 methylates lanosterol at C-24 to produce eburicol. Eburicol is the substrate of the sterol 14-alpha demethylase encoded by cyp51A and cyp51B, to yield 4,4,24-trimethyl ergosta-8,14,24(28)-trienol. The C-14 reductase erg24 then reduces the C14=C15 double bond which leads to 4,4-dimethylfecosterol. A sequence of further demethylations at C-4, involving the C-4 demethylation complex containing the C-4 methylsterol oxidases erg25A or erg25B, the sterol-4-alpha-carboxylate 3-dehydrogenase erg26 and the 3-keto-steroid reductase erg27, leads to the production of fecosterol via 4-methylfecosterol. The C-8 sterol isomerase erg2 then catalyzes the reaction which results in unsaturation at C-7 in the B ring of sterols and thus converts fecosterol to episterol. The sterol-C5-desaturase erg3B then catalyzes the introduction of a C-5 double bond in the B ring to produce 5-dehydroepisterol. The 2 other sterol-C5-desaturases, erg3A and erg3C, seem to be less important in ergosterol biosynthesis. The C-22 sterol desaturase erg5 further converts 5-dehydroepisterol into ergosta-5,7,22,24(28)-tetraen-3beta-ol by forming the C-22(23) double bond in the sterol side chain. Finally, ergosta-5,7,22,24(28)-tetraen-3beta-ol is substrate of the C-24(28) sterol reductases erg4A and erg4B to produce ergosterol. Possible alternative sterol biosynthetic pathways might exist from fecosterol to ergosterol, depending on the activities of the erg3 isoforms. The chain is C-8 sterol isomerase erg2 from Aspergillus fumigatus (strain ATCC MYA-4609 / CBS 101355 / FGSC A1100 / Af293) (Neosartorya fumigata).